A 178-amino-acid chain; its full sequence is MNLFVYIAQNPTLTKWFFCCVCTILTMPFFKKPYRKRGISRTPYEWLTYADKCVIELSKSELKPNEEKELPKDIKEDCKTVEEKEKVVPRKPLQSEGINEDDSQKNGELIVLHGINHQAAMLTACGLFMVTSSNTNKWKIAFASFLLGMFFTQFGFQKSERSINAEKLESIEKPENDN.

Topologically, residues 1 to 12 are cytoplasmic; it reads MNLFVYIAQNPT. A helical; Signal-anchor for type II membrane protein transmembrane segment spans residues 13–30; sequence LTKWFFCCVCTILTMPFF. The Lumenal portion of the chain corresponds to 31–178; that stretch reads KKPYRKRGIS…ESIEKPENDN (148 aa).

Its subcellular location is the endoplasmic reticulum membrane. In terms of biological role, has a role in meiosis. The protein is Meiotically up-regulated gene 95 protein (mug95) of Schizosaccharomyces pombe (strain 972 / ATCC 24843) (Fission yeast).